The following is a 738-amino-acid chain: Catalase-peroxidase (738 aa).

A disordered region spans residues 1–24 (MSEEHPPIAEANSQPSNGCPVAGG). The tryptophyl-tyrosyl-methioninium (Trp-Tyr) (with M-257) cross-link spans 108–231 (WHAAGTYRVG…LAAVQMGLIY (124 aa)). His109 (proton acceptor) is an active-site residue. The segment at residues 231-257 (YVNPEGPNGNPDPLAAAIDIRETFGRM) is a cross-link (tryptophyl-tyrosyl-methioninium (Tyr-Met) (with W-108)). Position 272 (His272) interacts with heme b.

This sequence belongs to the peroxidase family. Peroxidase/catalase subfamily. As to quaternary structure, homodimer or homotetramer. Heme b is required as a cofactor. Post-translationally, formation of the three residue Trp-Tyr-Met cross-link is important for the catalase, but not the peroxidase activity of the enzyme.

The catalysed reaction is H2O2 + AH2 = A + 2 H2O. It catalyses the reaction 2 H2O2 = O2 + 2 H2O. Bifunctional enzyme with both catalase and broad-spectrum peroxidase activity. This Mycobacteroides abscessus (strain ATCC 19977 / DSM 44196 / CCUG 20993 / CIP 104536 / JCM 13569 / NCTC 13031 / TMC 1543 / L948) (Mycobacterium abscessus) protein is Catalase-peroxidase.